The chain runs to 338 residues: Large ribosomal subunit protein uL10 (338 aa).

The span at 298–308 (AAQQTQTQQST) shows a compositional bias: low complexity. Residues 298–338 (AAQQTQTQQSTAEEKKEEKKEEEKKGPSEEEIGSGLASLFG) form a disordered region. The span at 309–325 (AEEKKEEKKEEEKKGPS) shows a compositional bias: basic and acidic residues.

This sequence belongs to the universal ribosomal protein uL10 family. As to quaternary structure, part of the 50S ribosomal subunit. Forms part of the ribosomal stalk which helps the ribosome interact with GTP-bound translation factors. Forms a heptameric L10(L12)2(L12)2(L12)2 complex, where L10 forms an elongated spine to which the L12 dimers bind in a sequential fashion.

In terms of biological role, forms part of the ribosomal stalk, playing a central role in the interaction of the ribosome with GTP-bound translation factors. This chain is Large ribosomal subunit protein uL10, found in Saccharolobus islandicus (strain M.16.27) (Sulfolobus islandicus).